The following is a 525-amino-acid chain: Probable lipid II flippase MurJ (525 aa).

14 helical membrane passes run 10–30 (LLKSGIIVSAMTLISRVLGLV), 32–52 (DVVVANLMGAGASADVFFFAN), 100–120 (VLVTIVTLIGVLGSGAVTALF), 140–160 (LASLLLKITFPYLWFITFVAL), 171–191 (FAVSSFTPVFLNVMMILCAWY), 203–223 (LAIGVFLGGLVQFLFQLPFLI), 247–267 (MIPALFGVSVSQINLLFDSFV), 285–305 (LLEFPLGLFGIAIATVILPAL), 330–350 (FLGIPAMLGLMVLAKPMLMVL), 368–388 (LLAYSSGLLSFMLIKVLAPGY), 402–422 (IIAMVSNIVLNAIFAWFYGYV), 423–443 (GLAVATSMSAFLNMALLYRGL), 455–475 (TVWFVARLAMAGAVMTGALLW), and 495–515 (LTGLIGLGVASYLAILLLLGV).

It belongs to the MurJ/MviN family.

It is found in the cell inner membrane. Its pathway is cell wall biogenesis; peptidoglycan biosynthesis. Functionally, involved in peptidoglycan biosynthesis. Transports lipid-linked peptidoglycan precursors from the inner to the outer leaflet of the cytoplasmic membrane. The polypeptide is Probable lipid II flippase MurJ (Vibrio cholerae serotype O1 (strain ATCC 39315 / El Tor Inaba N16961)).